A 174-amino-acid chain; its full sequence is UPF0316 protein LMHCC_0787 (174 aa).

3 helical membrane-spanning segments follow: residues 4–24, 36–56, and 62–82; these read GIFI…IYTV, LAAL…SLVL, and IANV…GMKI.

The protein belongs to the UPF0316 family.

It is found in the cell membrane. The protein is UPF0316 protein LMHCC_0787 of Listeria monocytogenes serotype 4a (strain HCC23).